The primary structure comprises 150 residues: FAD synthase (150 aa).

ATP contacts are provided by residues 8–9 (AF), 13–16 (HPGH), Asp-95, and His-122.

This sequence belongs to the archaeal FAD synthase family. In terms of assembly, homodimer. Requires a divalent metal cation as cofactor.

The enzyme catalyses FMN + ATP + H(+) = FAD + diphosphate. It participates in cofactor biosynthesis; FAD biosynthesis; FAD from FMN: step 1/1. Its function is as follows. Catalyzes the transfer of the AMP portion of ATP to flavin mononucleotide (FMN) to produce flavin adenine dinucleotide (FAD) coenzyme. The protein is FAD synthase of Methanobrevibacter ruminantium (strain ATCC 35063 / DSM 1093 / JCM 13430 / OCM 146 / M1) (Methanobacterium ruminantium).